The following is a 332-amino-acid chain: Ferredoxin--NADP reductase 1 (332 aa).

Positions 35, 43, 48, 88, 123, 284, and 325 each coordinate FAD.

Belongs to the ferredoxin--NADP reductase type 2 family. As to quaternary structure, homodimer. FAD is required as a cofactor.

It catalyses the reaction 2 reduced [2Fe-2S]-[ferredoxin] + NADP(+) + H(+) = 2 oxidized [2Fe-2S]-[ferredoxin] + NADPH. This is Ferredoxin--NADP reductase 1 from Listeria monocytogenes serotype 4b (strain F2365).